We begin with the raw amino-acid sequence, 172 residues long: Shikimate kinase (172 aa).

Gly-11–Thr-16 serves as a coordination point for ATP. Thr-15 serves as a coordination point for Mg(2+). Residues Asp-33, Arg-57, and Gly-79 each contribute to the substrate site. Arg-117 lines the ATP pocket. Arg-136 contacts substrate.

Belongs to the shikimate kinase family. In terms of assembly, monomer. It depends on Mg(2+) as a cofactor.

It localises to the cytoplasm. It catalyses the reaction shikimate + ATP = 3-phosphoshikimate + ADP + H(+). It participates in metabolic intermediate biosynthesis; chorismate biosynthesis; chorismate from D-erythrose 4-phosphate and phosphoenolpyruvate: step 5/7. Its function is as follows. Catalyzes the specific phosphorylation of the 3-hydroxyl group of shikimic acid using ATP as a cosubstrate. This chain is Shikimate kinase, found in Caldicellulosiruptor saccharolyticus (strain ATCC 43494 / DSM 8903 / Tp8T 6331).